The primary structure comprises 703 residues: Polyribonucleotide nucleotidyltransferase (703 aa).

2 residues coordinate Mg(2+): Asp-484 and Asp-490. The KH domain maps to 551–610 (PTVTTLRVLPEKISVIIGPAGKNIKKIIEETGVKIDLDPTGLVKIYATSKIAAEKAIDMI). An S1 motif domain is found at 620–688 (GEVYLGKVTR…DQGRIKVSLK (69 aa)).

Belongs to the polyribonucleotide nucleotidyltransferase family. It depends on Mg(2+) as a cofactor.

Its subcellular location is the cytoplasm. It carries out the reaction RNA(n+1) + phosphate = RNA(n) + a ribonucleoside 5'-diphosphate. In terms of biological role, involved in mRNA degradation. Catalyzes the phosphorolysis of single-stranded polyribonucleotides processively in the 3'- to 5'-direction. The protein is Polyribonucleotide nucleotidyltransferase of Sulfurihydrogenibium sp. (strain YO3AOP1).